We begin with the raw amino-acid sequence, 397 residues long: MDPLASSISQFALEFSKELAASAAGKNIFFSPWSISSALAMVYLGARGTTAVEMAKVLQLNRDQADKTGPESEKKRKMEFNLGKAEEIHCDFQTLISEILKPTDAHVLKTANGIYGEKTYPFHNKYLEEVKTYFGAEPQSVNFVEASDQIRKEINSWVESQTQGKILNLLPDDSVDSTTRMILVNALYFKGTWEHQFLAQNTTEKPFRINETTSKPVQMMSMKEKLHVFHIEKPQATGLQLYYERRDVSLFILLPEDLGGLEQLEKAITYEKLNEWTSADMMELYDVQLSLPKFKLEESYDLKSTLSSMGMSDAFNPSKADFSGMSLERNLYLSNIFHKVFVEINEEGTEAAAGTGSEVGFRIKYPSIEFNVDHPFLFFIRHNKTNSILFYGRFCSP.

The Nuclear localization signal motif lies at 74–77 (KKRK).

Belongs to the serpin family. Ov-serpin subfamily.

It localises to the nucleus. It is found in the cytoplasm. Protease inhibitor that may play a role in the regulation of protease activities during hematopoiesis and apoptosis induced by TNF. May regulate protease activities in the cytoplasm and in the nucleus. In Otolemur garnettii (Small-eared galago), this protein is Serpin B10 (SERPINB10).